The chain runs to 854 residues: Glucans biosynthesis glucosyltransferase H (854 aa).

A run of 7 helical transmembrane segments spans residues 155-175 (ILLA…KTIL), 209-229 (ILVL…TALM), 528-548 (VFLT…FLVL), 583-603 (IALF…SVIL), 619-639 (FLSL…RMLF), 671-691 (FVRH…MAWL), and 695-715 (FLWW…VSVY).

It belongs to the glycosyltransferase 2 family. OpgH subfamily.

The protein resides in the cell inner membrane. It functions in the pathway glycan metabolism; osmoregulated periplasmic glucan (OPG) biosynthesis. Functionally, involved in the biosynthesis of osmoregulated periplasmic glucans (OPGs). In Pectobacterium atrosepticum (strain SCRI 1043 / ATCC BAA-672) (Erwinia carotovora subsp. atroseptica), this protein is Glucans biosynthesis glucosyltransferase H.